Reading from the N-terminus, the 791-residue chain is Lon protease (791 aa).

The region spanning 3–209 (KPILISRAIV…TILHLLFDQL (207 aa)) is the Lon N-terminal domain. Residue 365–372 (GPPGVGKT) coordinates ATP. The Lon proteolytic domain occupies 605–790 (TTIPGIVNGM…DEVYNIVFGE (186 aa)). Catalysis depends on residues Ser696 and Lys739.

The protein belongs to the peptidase S16 family. Homohexamer. Organized in a ring with a central cavity.

Its subcellular location is the cytoplasm. The enzyme catalyses Hydrolysis of proteins in presence of ATP.. Functionally, ATP-dependent serine protease that mediates the selective degradation of mutant and abnormal proteins as well as certain short-lived regulatory proteins. Required for cellular homeostasis and for survival from DNA damage and developmental changes induced by stress. Degrades polypeptides processively to yield small peptide fragments that are 5 to 10 amino acids long. Binds to DNA in a double-stranded, site-specific manner. The polypeptide is Lon protease (Ureaplasma parvum serovar 3 (strain ATCC 27815 / 27 / NCTC 11736)).